The following is a 165-amino-acid chain: Pro-MCH (165 aa).

Residues 1–21 form the signal peptide; it reads MAKMTLSSYMLMLAFSLFSQG. Residues 66 to 89 form a disordered region; that stretch reads YKNDESGFMNDDDNKNSKNTGSKQ. Isoleucine amide is present on Ile-143. Cys-153 and Cys-162 are joined by a disulfide.

The protein belongs to the MCH family. Post-translationally, pro-MCH is processed differentially in the brain and in peripheral organs producing two neuropeptides; NEI and MCH. A third peptide, NGE, may also be produced. Preferential processing in neurons by prohormone convertase 2 (PC2) generates NEI. MCH is generated in neurons of the lateral hypothalmic area by several prohormone convertases including PC1/3, PC2 and PC5/6. As to expression, predominantly expressed in hypothalamus. Also found in heart, intestine, spleen and testis (spermatogonia, early spermatocytes and Sertoli cells). In brain only mature MCH and NEI peptides are present. In peripheral tissues a large product, encompassing the NEI and MCH domains of the precursor, is found predominantly.

It is found in the secreted. In terms of biological role, MCH may act as a neurotransmitter or neuromodulator in a broad array of neuronal functions directed toward the regulation of goal-directed behavior, such as food intake, and general arousal. This Mus musculus (Mouse) protein is Pro-MCH (Pmch).